The chain runs to 31 residues: Cyclotide psybry C (31 aa).

Positions 1-31 (GFNPCGETCQIDQTCHAPGCTCSIANICVRN) form a cross-link, cyclopeptide (Gly-Asn). Cystine bridges form between Cys-5-Cys-20, Cys-9-Cys-22, and Cys-15-Cys-28.

Post-translationally, this is a cyclic peptide.

Probably participates in a plant defense mechanism. The chain is Cyclotide psybry C from Psychotria brachyceras.